The sequence spans 492 residues: MKQKCVLIITDGIGYNKNSKFNAFEAAKKPSYEKLFKEVPNSLLKTSGLAVGLPEGQMGNSEVGHMCIGSGRIIYQNLVRINKAIENKELEKNENLQKLLAKCKRVHIIGLYSDGGVHSMDTHFKAMLEICAKNGNEVFAHAITDGRDVNPKSGLNFIKDLKEFCENLGVHFATLCGRFYAMDRDKRWDRVKECYECLLGKAYKVPNLLEYLQKSYDENVTDEFIKAVQNENYKGMREEDGIIFINFRNDRMKQLVEVLNSKDFKEFEREKIFENLLTMSVYDDKFKLPVLFEKEKIENTLAQVISKAGLSQLHTAETEKYAHVTFFFNGGKEELLENETRVLIPSPKVKTYDEKPQMSAFEVCDAVKKGIEKGEDFIVVNFANGDMVGHTGDFNAAIKAVEAVDTCLGEIVECAKKHDYAFIITSDHGNCEAMQDEKGNLLTNHTTFDVFVFVQAKGVSKIKDNMGLSNIAASVLKILDLEIPKEMNEALF.

Aspartate 11 and serine 61 together coordinate Mn(2+). The active-site Phosphoserine intermediate is serine 61. Residues histidine 118, arginine 147–aspartate 148, arginine 178, arginine 184, arginine 248–arginine 251, and lysine 320 each bind substrate. Mn(2+) is bound by residues aspartate 386, histidine 390, aspartate 427, histidine 428, and histidine 445.

Belongs to the BPG-independent phosphoglycerate mutase family. Monomer. It depends on Mn(2+) as a cofactor.

The enzyme catalyses (2R)-2-phosphoglycerate = (2R)-3-phosphoglycerate. It participates in carbohydrate degradation; glycolysis; pyruvate from D-glyceraldehyde 3-phosphate: step 3/5. In terms of biological role, catalyzes the interconversion of 2-phosphoglycerate and 3-phosphoglycerate. This Campylobacter jejuni subsp. jejuni serotype O:23/36 (strain 81-176) protein is 2,3-bisphosphoglycerate-independent phosphoglycerate mutase.